The primary structure comprises 324 residues: Tyrosine--tRNA ligase (324 aa).

Y36 contributes to the L-tyrosine binding site. A 'HIGH' region motif is present at residues 41–49 (PSGKVHLGH). Residues Y158, Q162, D165, and Q180 each contribute to the L-tyrosine site. The short motif at 215–219 (KMSSS) is the 'KMSKS' region element. Residue S218 participates in ATP binding.

It belongs to the class-I aminoacyl-tRNA synthetase family. TyrS type 3 subfamily. In terms of assembly, homodimer.

It localises to the cytoplasm. It catalyses the reaction tRNA(Tyr) + L-tyrosine + ATP = L-tyrosyl-tRNA(Tyr) + AMP + diphosphate + H(+). In terms of biological role, catalyzes the attachment of tyrosine to tRNA(Tyr) in a two-step reaction: tyrosine is first activated by ATP to form Tyr-AMP and then transferred to the acceptor end of tRNA(Tyr). This chain is Tyrosine--tRNA ligase, found in Methanopyrus kandleri (strain AV19 / DSM 6324 / JCM 9639 / NBRC 100938).